The chain runs to 155 residues: Endoribonuclease YbeY (155 aa).

Residues histidine 110, histidine 114, and histidine 120 each contribute to the Zn(2+) site.

Belongs to the endoribonuclease YbeY family. Zn(2+) serves as cofactor.

It localises to the cytoplasm. Single strand-specific metallo-endoribonuclease involved in late-stage 70S ribosome quality control and in maturation of the 3' terminus of the 16S rRNA. This Deinococcus radiodurans (strain ATCC 13939 / DSM 20539 / JCM 16871 / CCUG 27074 / LMG 4051 / NBRC 15346 / NCIMB 9279 / VKM B-1422 / R1) protein is Endoribonuclease YbeY.